The chain runs to 121 residues: Probable intron-encoded DNA endonuclease aI1 (121 aa).

The protein belongs to the LAGLIDADG endonuclease family.

The protein resides in the mitochondrion. Its function is as follows. Mitochondrial DNA endonuclease involved in intron homing. The chain is Probable intron-encoded DNA endonuclease aI1 (aI1) from Mycosarcoma maydis (Corn smut fungus).